Consider the following 111-residue polypeptide: Irditoxin subunit B (111 aa).

A signal peptide spans 1 to 19 (MKTLLLAVAVVAFVCLGSA). Residues 20–34 (DQLGLGRQQIDWGKG) constitute a propeptide that is removed on maturation. Gln35 is subject to Pyrrolidone carboxylic acid. Cystine bridges form between Cys44–Cys68, Cys47–Cys55, Cys61–Cys87, Cys91–Cys102, and Cys103–Cys108.

The protein belongs to the three-finger toxin family. Ancestral subfamily. Boigatoxin sub-subfamily. As to quaternary structure, heterodimer of A and B chains; disulfide-linked. In terms of tissue distribution, expressed by the venom gland.

The protein localises to the secreted. In terms of biological role, this bird and reptile-specific postsynaptic neurotoxin inhibits the chick muscle alpha-1-beta-1-gamma-delta (CHRNA1-CHRNB1-CHRNG-CHRND) nicotinic acetylcholine receptor (nAChR) 100-fold more compared with the mouse receptor. In vivo, produces rapid flaccid paralysis, dyspnea and increased respiratory rate in geckos. At sublethal doses geckos were immobilized for up to three days and then recovered. Chicks injected with lethal doses showed rapid onset of inactivity, dyspnea and neck droop, and no extended paralysis with survival was seen. The chain is Irditoxin subunit B from Boiga irregularis (Brown tree snake).